The sequence spans 923 residues: Protein dct-6 (923 aa).

Residues 312 to 347 (DMNDQIEQMISLLVDELSELEKLEQLCKEVERTGNQ) are a coiled coil.

May have a role in tumor suppression. The polypeptide is Protein dct-6 (dct-6) (Caenorhabditis elegans).